Reading from the N-terminus, the 758-residue chain is 5-methyltetrahydropteroyltriglutamate--homocysteine methyltransferase (758 aa).

5-methyltetrahydropteroyltri-L-glutamate contacts are provided by residues 16-19 (RELK) and Lys-112. L-homocysteine contacts are provided by residues 433 to 435 (IGS) and Glu-486. L-methionine is bound by residues 433–435 (IGS) and Glu-486. 5-methyltetrahydropteroyltri-L-glutamate contacts are provided by residues 517-518 (RC) and Trp-563. Asp-601 is a binding site for L-homocysteine. Residue Asp-601 coordinates L-methionine. Residue Glu-607 coordinates 5-methyltetrahydropteroyltri-L-glutamate. Residues His-643, Cys-645, and Glu-667 each contribute to the Zn(2+) site. The Proton donor role is filled by His-696. A Zn(2+)-binding site is contributed by Cys-728.

It belongs to the vitamin-B12 independent methionine synthase family. The cofactor is Zn(2+).

The enzyme catalyses 5-methyltetrahydropteroyltri-L-glutamate + L-homocysteine = tetrahydropteroyltri-L-glutamate + L-methionine. It functions in the pathway amino-acid biosynthesis; L-methionine biosynthesis via de novo pathway; L-methionine from L-homocysteine (MetE route): step 1/1. Its function is as follows. Catalyzes the transfer of a methyl group from 5-methyltetrahydrofolate to homocysteine resulting in methionine formation. This is 5-methyltetrahydropteroyltriglutamate--homocysteine methyltransferase from Neisseria meningitidis serogroup C / serotype 2a (strain ATCC 700532 / DSM 15464 / FAM18).